A 68-amino-acid polypeptide reads, in one-letter code: Large ribosomal subunit protein bL32 (68 aa).

The tract at residues 1-25 is disordered; sequence MAVPQNKITKSRRGQRRSHDALVAG.

It belongs to the bacterial ribosomal protein bL32 family.

The protein is Large ribosomal subunit protein bL32 of Dinoroseobacter shibae (strain DSM 16493 / NCIMB 14021 / DFL 12).